The following is a 610-amino-acid chain: Tyrosine-protein kinase Drl (610 aa).

Residues 1-20 (MAPNLLTIGLLLTLIASGQA) form the signal peptide. At 21-242 (HLNIFLNLHE…RENLVPPASG (222 aa)) the chain is on the extracellular side. Residues 24–155 (IFLNLHEVLR…NLIFKRKKIC (132 aa)) form the WIF domain. N-linked (GlcNAc...) asparagine glycans are attached at residues N63, N99, and N143. The disordered stretch occupies residues 202 to 230 (QAPEKQRPVVTESPVGRGNSGGSKRDFDP). The chain crosses the membrane as a helical span at residues 243 to 263 (LVTLIVGGILALVLVSTLILI). The Cytoplasmic portion of the chain corresponds to 264-610 (AYCAKGPSKR…EFHTQITRYV (347 aa)). One can recognise a Protein kinase domain in the interval 343-606 (VRLSCLVQEG…ICLSEFHTQI (264 aa)). Residues 349-357 (VQEGNFGRI) and K371 each bind ATP. Residue D468 is the Proton acceptor of the active site. At Y498 the chain carries Phosphotyrosine; by autocatalysis.

It belongs to the protein kinase superfamily. Tyr protein kinase family. In the embryonic abdominal hemisegment, expression is restricted to cell body, axon and growth cone of a cluster of 20 ventral nerve cord interneurons. During muscle growth and attachment events in the embryonic abdominal hemisegment, expression is in somatic muscle fibers 21-23 at 10-13 hours and 2 patches of approximately 15 neighboring epidermal cells (dorsal and ventral attachment sites) at 6-13 hours.

It is found in the cell membrane. It catalyses the reaction L-tyrosyl-[protein] + ATP = O-phospho-L-tyrosyl-[protein] + ADP + H(+). Functionally, probable coreceptor of Wnt proteins. Involved in neuronal pathway recognition and ventral muscle attachment site selection. Non-vital for development. May be part of a signal transduction cascade involved in learning and possibly memory. The polypeptide is Tyrosine-protein kinase Drl (drl) (Drosophila melanogaster (Fruit fly)).